We begin with the raw amino-acid sequence, 515 residues long: Maturase K (515 aa).

Belongs to the intron maturase 2 family. MatK subfamily.

It is found in the plastid. It localises to the chloroplast. In terms of biological role, usually encoded in the trnK tRNA gene intron. Probably assists in splicing its own and other chloroplast group II introns. The protein is Maturase K of Pinus koraiensis (Korean pine).